Consider the following 378-residue polypeptide: Cyclic di-GMP phosphodiesterase response regulator RpfG (378 aa).

The region spanning 29–147 is the Response regulatory domain; that stretch reads NIVIVDDQMS…ELRARCSNLL (119 aa). Residue Asp80 is modified to 4-aspartylphosphate. An HD-GYP domain is found at 174-371; that stretch reads VEERERETLS…LEQICGQFST (198 aa).

As to quaternary structure, interacts with a subset of GGDEF domain-containing proteins. Post-translationally, phosphorylated and activated by RpfC.

Its subcellular location is the cytoplasm. It carries out the reaction 3',3'-c-di-GMP + 2 H2O = 2 GMP + 2 H(+). Functionally, member of the two-component regulatory system RpfG/RpfC, which is involved in the perception and response to the diffusible signaling factor (DSF), which is essential for cell-cell signaling. Detection of DSF leads to the positive regulation of biofilm dispersal and the production of virulence factors. Activated RpfG degrades cyclic di-GMP to GMP, leading to the activation of Clp, a global transcriptional regulator that regulates a large set of genes in DSF pathway. May also directly control genes involved in biofilm dispersal. This is Cyclic di-GMP phosphodiesterase response regulator RpfG (rpfG) from Xanthomonas campestris pv. campestris (strain 8004).